A 196-amino-acid chain; its full sequence is Imidazoleglycerol-phosphate dehydratase (196 aa).

It belongs to the imidazoleglycerol-phosphate dehydratase family.

Its subcellular location is the cytoplasm. The enzyme catalyses D-erythro-1-(imidazol-4-yl)glycerol 3-phosphate = 3-(imidazol-4-yl)-2-oxopropyl phosphate + H2O. Its pathway is amino-acid biosynthesis; L-histidine biosynthesis; L-histidine from 5-phospho-alpha-D-ribose 1-diphosphate: step 6/9. This is Imidazoleglycerol-phosphate dehydratase from Halobacterium salinarum (strain ATCC 700922 / JCM 11081 / NRC-1) (Halobacterium halobium).